Reading from the N-terminus, the 223-residue chain is DNA-directed RNA polymerase III subunit RPC7 (223 aa).

The tract at residues 110 to 223 is disordered; sequence MMPRNKCKKA…SDDNMDEATY (114 aa). The span at 114–125 shows a compositional bias: basic residues; sequence NKCKKAGPKPKK. Threonine 133 carries the post-translational modification Phosphothreonine. Residues 140-155 are compositionally biased toward basic and acidic residues; sequence DVLKKMEELEKRGDGE. Serine 157 carries the phosphoserine modification. The segment covering 164 to 173 has biased composition (basic and acidic residues); it reads KEGSKEKSKE. 2 stretches are compositionally biased toward acidic residues: residues 174–198 and 205–223; these read GDDD…EEND and EDGD…EATY.

It belongs to the eukaryotic RPC7 RNA polymerase subunit family. In terms of assembly, component of the RNA polymerase III complex consisting of 17 subunits: a ten-subunit horseshoe-shaped catalytic core composed of POLR3A/RPC1, POLR3B/RPC2, POLR1C/RPAC1, POLR1D/RPAC2, POLR3K/RPC10, POLR2E/RPABC1, POLR2F/RPABC2, POLR2H/RPABC3, POLR2K/RPABC4 and POLR2L/RPABC5; a mobile stalk composed of two subunits POLR3H/RPC8 and CRCP/RPC9, protruding from the core and functioning primarily in transcription initiation; and additional subunits homologous to general transcription factors of the RNA polymerase II machinery, POLR3C/RPC3-POLR3F/RPC6-POLR3G/RPC7 heterotrimer required for transcription initiation and POLR3D/RPC4-POLR3E/RPC5 heterodimer involved in both transcription initiation and termination. Directly interacts with POLR3C/RPC62. Also found in a trimeric complex with POLR3C/RPC3 and POLR3GL. As to expression, barely detectable in differentiated tissues. Expressed in embryonic stem cells and in other dividing cells, such as some tumor cell lines.

The protein localises to the nucleus. It is found in the cytoplasm. In terms of biological role, DNA-dependent RNA polymerase catalyzes the transcription of DNA into RNA using the four ribonucleoside triphosphates as substrates. Specific peripheric component of RNA polymerase III (Pol III) which synthesizes small non-coding RNAs including 5S rRNA, snRNAs, tRNAs and miRNAs from at least 500 distinct genomic loci. Acts as a long tether that bridges POLR3C/RPC3-POLR3F/RPC6-POLR3G/RPC7 heterotrimer and the mobile stalk of Pol III, coordinating the dynamics of Pol III stalk and clamp modules during the transition from apo to elongation state. Pol III exists as two alternative complexes defined by the mutually exclusive incorporation of subunit POLR3G/RPC7alpha or POLR3GL/RPC7beta. POLR3G/RPC7alpha modulates Pol III transcriptome by specifically enhancing the transcription of snaR-A non-coding RNAs. At resting state, occupies the active site of apo Pol III and keeps Pol III in an autoinhibitory mode, preventing non-specific transcription. Pol III plays a key role in sensing and limiting infection by intracellular bacteria and DNA viruses. Acts as a nuclear and cytosolic DNA sensor involved in innate immune response. Can sense non-self dsDNA that serves as template for transcription into dsRNA. The non-self RNA polymerase III transcripts, such as Epstein-Barr virus-encoded RNAs (EBERs), induce type I interferon and NF-kappa-B through the RIG-I pathway. This chain is DNA-directed RNA polymerase III subunit RPC7, found in Homo sapiens (Human).